A 250-amino-acid polypeptide reads, in one-letter code: Triosephosphate isomerase, glycosomal (250 aa).

Substrate is bound by residues Asn-11 and Lys-13. His-95 (electrophile) is an active-site residue. Residue Glu-167 is the Proton acceptor of the active site.

This sequence belongs to the triosephosphate isomerase family. As to quaternary structure, homodimer.

It is found in the glycosome. The enzyme catalyses D-glyceraldehyde 3-phosphate = dihydroxyacetone phosphate. Its pathway is carbohydrate biosynthesis; gluconeogenesis. It functions in the pathway carbohydrate degradation; glycolysis; D-glyceraldehyde 3-phosphate from glycerone phosphate: step 1/1. The polypeptide is Triosephosphate isomerase, glycosomal (Trypanosoma brucei brucei).